Consider the following 327-residue polypeptide: MIRTSFKHSIETRNQLLHRRHFVVAAALTVGNFVFGRDARLADAMDNGELHNKNEDYKAKAEELKEQRLRSIANSRPMKPCYEGHVPLYPHERVLLFITSGLKSYFHPEDGENIVQLGEASAFTPFLERLKNTMLSDKTGRRILREQPDITSESLDMDRLKKMAPNTLGHSYYKWLIKEGVSPDTRAPVKYIDDPTHAYIFKRYRQCHDFYHAVNDLPIIIEGEIAVKALEAANIGVPMAALGALLAPLRLKPVQKKRLYDVYLPWAVRTGLSCEPLINVYWEELLEHDVEELRKKLRITPPPDLRAIRRERAQQRKQFKLKYERHE.

The Zn(2+) site is built by histidine 208, aspartate 209, histidine 212, and glutamate 224.

Belongs to the COQ4 family. In terms of assembly, component of a multi-subunit COQ enzyme complex, composed of at least COQ3, COQ4, COQ5, COQ6, COQ7 and COQ9. Zn(2+) is required as a cofactor.

Its subcellular location is the mitochondrion inner membrane. The enzyme catalyses a 4-hydroxy-3-methoxy-5-(all-trans-polyprenyl)benzoate + H(+) = a 2-methoxy-6-(all-trans-polyprenyl)phenol + CO2. The protein operates within cofactor biosynthesis; ubiquinone biosynthesis. Functionally, lyase that catalyzes the C1-decarboxylation of 4-hydroxy-3-methoxy-5-(all-trans-polyprenyl)benzoic acid into 2-methoxy-6-(all-trans-polyprenyl)phenol during ubiquinone biosynthesis. This chain is Ubiquinone biosynthesis protein COQ4, mitochondrial, found in Lachancea thermotolerans (strain ATCC 56472 / CBS 6340 / NRRL Y-8284) (Yeast).